The sequence spans 394 residues: Cystathionine gamma-lyase (394 aa).

Residues 37 to 56 (KQSSPANPIGTYEYSRSQNP) are disordered. Residues Arg-52, Tyr-104, and Arg-109 each contribute to the substrate site. Lys-204 is subject to N6-(pyridoxal phosphate)lysine. Substrate is bound at residue Glu-334. Ser-362 carries the phosphoserine modification.

Belongs to the trans-sulfuration enzymes family. Homotetramer. It depends on pyridoxal 5'-phosphate as a cofactor.

The protein localises to the cytoplasm. The enzyme catalyses L,L-cystathionine + H2O = 2-oxobutanoate + L-cysteine + NH4(+). It participates in amino-acid biosynthesis; L-cysteine biosynthesis; L-cysteine from L-homocysteine and L-serine: step 2/2. Catalyzes the production of cysteine from cystathionine in the reverse transsulfuration pathway for the biosynthesis of sulfur-containing amino acids cysteine and methionine. In this pathway, homocysteine sulfur is converted to cysteine sulfur. Also has cystathionine beta-lyase and cystathionine gamma-synthase activities in vitro. Cystathionine beta-lyase may be physiological, while cystathionine gamma-synthase activity is not, as the required substrate O-succinyl-L-homoserine(OSH) does not occur naturally in S.cerevisiae. The chain is Cystathionine gamma-lyase from Saccharomyces cerevisiae (strain ATCC 204508 / S288c) (Baker's yeast).